The sequence spans 500 residues: MSWAVVFGLLAALLLLLLLTRRRTRRPGEPPLDLGSIPWLGHALEFGKDAAGFLTRMKEKHGDIFTVLVGGRHVTVLLDPHSYDAVVWEPRSRLDFHAYAVFLMERIFDVQLPHYNPGDEKSKMKPTLLHKELQALTDAMYTNLRTVLLGDTVEAGSGWHEMGLLEFSYGFLLRAGYLTQYGVEAPPHTQESQAQDRVHSADVFHTFRQLDLLLPKLARGSLSAGDKDRVGKVKGRLWKLLSPTRLASRAHRSRWLESYLLHLEEMGVSEEMQARALVLQLWATQGNMGPAAFWLLLFLLKNPEALAAVRGELETVLLGAEQPISQMTTLPQKVLDSMPVLDSVLSESLRLTAAPFITREVVADLALPMADGREFSLRRGDRLLLFPFLSPQKDPEIYTDPEVFKYNRFLNPDGSEKKDFYKDGKRLKNYSLPWGAGHNQCLGKGYAVNSIKQFVFLVLTQFDLELITPDVDIPEFDLSRYGFGLMQPEHDVPVRYRIRP.

Residues 1–20 (MSWAVVFGLLAALLLLLLLT) form a helical membrane-spanning segment. Residues Arg-106, Leu-112, Asn-287, 358–359 (TR), and Arg-382 each bind substrate. Cys-441 contributes to the heme binding site.

This sequence belongs to the cytochrome P450 family. Requires heme as cofactor.

It is found in the endoplasmic reticulum membrane. The enzyme catalyses prostaglandin H2 = prostaglandin I2. The catalysed reaction is a hydroperoxyeicosatetraenoate = an oxoeicosatetraenoate + H2O. It catalyses the reaction (15S)-hydroperoxy-(5Z,8Z,11Z,13E)-eicosatetraenoate = 15-oxo-(5Z,8Z,11Z,13E)-eicosatetraenoate + H2O. It carries out the reaction (15S)-hydroperoxy-(5Z,8Z,11Z,13E)-eicosatetraenoate + AH2 = (15S)-hydroxy-(5Z,8Z,11Z,13E)-eicosatetraenoate + A + H2O. Its function is as follows. Catalyzes the biosynthesis and metabolism of eicosanoids. Catalyzes the isomerization of prostaglandin H2 to prostacyclin (= prostaglandin I2), a potent mediator of vasodilation and inhibitor of platelet aggregation. Additionally, displays dehydratase activity, toward hydroperoxyeicosatetraenoates (HPETEs), especially toward (15S)-hydroperoxy-(5Z,8Z,11Z,13E)-eicosatetraenoate (15(S)-HPETE). In Bos taurus (Bovine), this protein is Prostacyclin synthase (PTGIS).